The following is a 117-amino-acid chain: Large ribosomal subunit protein eL8 (117 aa).

The protein belongs to the eukaryotic ribosomal protein eL8 family. As to quaternary structure, part of the 50S ribosomal subunit. Part of the RNase P complex.

The protein resides in the cytoplasm. It catalyses the reaction Endonucleolytic cleavage of RNA, removing 5'-extranucleotides from tRNA precursor.. In terms of biological role, multifunctional RNA-binding protein that recognizes the K-turn motif in ribosomal RNA, the RNA component of RNase P, box H/ACA, box C/D and box C'/D' sRNAs. Part of ribonuclease P, a protein complex that generates mature tRNA molecules by cleaving their 5'-ends, this subunit dramatically stimulates RNase P activity. The polypeptide is Large ribosomal subunit protein eL8 (Methanococcus maripaludis (strain DSM 14266 / JCM 13030 / NBRC 101832 / S2 / LL)).